Consider the following 288-residue polypeptide: 33 kDa chaperonin (288 aa).

2 disulfides stabilise this stretch: Cys233–Cys235 and Cys267–Cys270.

This sequence belongs to the HSP33 family. Post-translationally, under oxidizing conditions two disulfide bonds are formed involving the reactive cysteines. Under reducing conditions zinc is bound to the reactive cysteines and the protein is inactive.

The protein resides in the cytoplasm. In terms of biological role, redox regulated molecular chaperone. Protects both thermally unfolding and oxidatively damaged proteins from irreversible aggregation. Plays an important role in the bacterial defense system toward oxidative stress. This is 33 kDa chaperonin from Actinobacillus succinogenes (strain ATCC 55618 / DSM 22257 / CCUG 43843 / 130Z).